Here is a 104-residue protein sequence, read N- to C-terminus: MEKIRLKLKAYDHRVLDRSVVAIVEAVKRSGSEIRGPIPLPTKNKRYTVLRSPHVNKDSREQFEIRVYSRLIDIISATPETVDSLMKLDLAPEVDVEVTSMETK.

The protein belongs to the universal ribosomal protein uS10 family. In terms of assembly, part of the 30S ribosomal subunit.

Its function is as follows. Involved in the binding of tRNA to the ribosomes. The protein is Small ribosomal subunit protein uS10 of Helicobacter pylori (strain J99 / ATCC 700824) (Campylobacter pylori J99).